Here is a 905-residue protein sequence, read N- to C-terminus: Protein translocase subunit SecA (905 aa).

Residues Q87, 105 to 109, and D512 each bind ATP; that span reads GEGKT. The tract at residues 836-905 is disordered; sequence DVDAVDEQRK…KKYKHCHGKL (70 aa). Positions 841 to 858 are enriched in basic and acidic residues; sequence DEQRKAADSAPREFRHEQ. Positions 890, 892, 901, and 902 each coordinate Zn(2+). The span at 896-905 shows a compositional bias: basic residues; that stretch reads KKYKHCHGKL.

The protein belongs to the SecA family. Monomer and homodimer. Part of the essential Sec protein translocation apparatus which comprises SecA, SecYEG and auxiliary proteins SecDF-YajC and YidC. It depends on Zn(2+) as a cofactor.

The protein localises to the cell inner membrane. It is found in the cytoplasm. The enzyme catalyses ATP + H2O + cellular proteinSide 1 = ADP + phosphate + cellular proteinSide 2.. Part of the Sec protein translocase complex. Interacts with the SecYEG preprotein conducting channel. Has a central role in coupling the hydrolysis of ATP to the transfer of proteins into and across the cell membrane, serving both as a receptor for the preprotein-SecB complex and as an ATP-driven molecular motor driving the stepwise translocation of polypeptide chains across the membrane. The polypeptide is Protein translocase subunit SecA (Idiomarina loihiensis (strain ATCC BAA-735 / DSM 15497 / L2-TR)).